The following is a 737-amino-acid chain: Polyribonucleotide nucleotidyltransferase (737 aa).

Residues D489 and D495 each coordinate Mg(2+). Residues 556 to 615 (PKIDTIKIDVDKIKIVIGKGGETIDKIIAETGVKIDIDEEGNVSIYSSDQDAINRAKEII) enclose the KH domain. Residues 625–693 (DEVYRAKVVR…EKGRIDASMK (69 aa)) form the S1 motif domain. Residues 691–737 (SMKALLPRPPKPEHDEKGEKSERPHRPRHQKDYKPKKEFTETSKDSE) are disordered. Residues 700-737 (PKPEHDEKGEKSERPHRPRHQKDYKPKKEFTETSKDSE) are compositionally biased toward basic and acidic residues.

This sequence belongs to the polyribonucleotide nucleotidyltransferase family. The cofactor is Mg(2+).

It localises to the cytoplasm. It carries out the reaction RNA(n+1) + phosphate = RNA(n) + a ribonucleoside 5'-diphosphate. Involved in mRNA degradation. Catalyzes the phosphorolysis of single-stranded polyribonucleotides processively in the 3'- to 5'-direction. The protein is Polyribonucleotide nucleotidyltransferase of Streptococcus pneumoniae serotype 4 (strain ATCC BAA-334 / TIGR4).